Reading from the N-terminus, the 363-residue chain is DNA replication and repair protein RecF (363 aa).

30–37 (GDNAQGKT) serves as a coordination point for ATP.

This sequence belongs to the RecF family.

The protein localises to the cytoplasm. Its function is as follows. The RecF protein is involved in DNA metabolism; it is required for DNA replication and normal SOS inducibility. RecF binds preferentially to single-stranded, linear DNA. It also seems to bind ATP. This is DNA replication and repair protein RecF from Syntrophotalea carbinolica (strain DSM 2380 / NBRC 103641 / GraBd1) (Pelobacter carbinolicus).